A 271-amino-acid polypeptide reads, in one-letter code: Formamidopyrimidine-DNA glycosylase (271 aa).

Residue proline 2 is the Schiff-base intermediate with DNA of the active site. Glutamate 3 functions as the Proton donor in the catalytic mechanism. Lysine 58 functions as the Proton donor; for beta-elimination activity in the catalytic mechanism. The DNA site is built by histidine 91, arginine 110, and arginine 152. Residues 237 to 271 (WVYGRTGQPCRKCGALVSKTRQGQRSSFFCAQCQK) form an FPG-type zinc finger. Arginine 261 acts as the Proton donor; for delta-elimination activity in catalysis.

This sequence belongs to the FPG family. Monomer. The cofactor is Zn(2+).

The catalysed reaction is Hydrolysis of DNA containing ring-opened 7-methylguanine residues, releasing 2,6-diamino-4-hydroxy-5-(N-methyl)formamidopyrimidine.. It carries out the reaction 2'-deoxyribonucleotide-(2'-deoxyribose 5'-phosphate)-2'-deoxyribonucleotide-DNA = a 3'-end 2'-deoxyribonucleotide-(2,3-dehydro-2,3-deoxyribose 5'-phosphate)-DNA + a 5'-end 5'-phospho-2'-deoxyribonucleoside-DNA + H(+). In terms of biological role, involved in base excision repair of DNA damaged by oxidation or by mutagenic agents. Acts as a DNA glycosylase that recognizes and removes damaged bases. Has a preference for oxidized purines, such as 7,8-dihydro-8-oxoguanine (8-oxoG). Has AP (apurinic/apyrimidinic) lyase activity and introduces nicks in the DNA strand. Cleaves the DNA backbone by beta-delta elimination to generate a single-strand break at the site of the removed base with both 3'- and 5'-phosphates. This chain is Formamidopyrimidine-DNA glycosylase, found in Nitrosomonas eutropha (strain DSM 101675 / C91 / Nm57).